The following is a 324-amino-acid chain: Short-chain dehydrogenase/reductase iacJ (324 aa).

Positions 42, 66, 93, 120, 204, 208, and 239 each coordinate NADP(+). The active-site Proton donor is Y204. K208 functions as the Lowers pKa of active site Tyr in the catalytic mechanism.

It belongs to the short-chain dehydrogenases/reductases (SDR) family.

It functions in the pathway secondary metabolite biosynthesis. Functionally, short-chain dehydrogenase/reductase; part of the gene cluster that mediates the biosynthesis of iso-A82775C, a enylepoxycyclohexane and biosynthetic precursor of the chloropestolide anticancer natural products. Within the cluster, the prenyltransferase iacE prenylates siccayne to generate pestalodiol E, using dimethylallyl diphosphate (DMAPP) as cosubstrate. The probable oxidoreductase iacF is then involved in the epoxidation of pestalodiol F to pestalodiol F, which is further converted to pestalofone A by the short-chain dehydrogenase/reductase iacG. Iso-A82775C is subsequently generated from pestalofone A by the short-chain dehydrogenase/reductase iacC. Iso-A82775C is further condensed with maldoxin via a Diels-Alder reaction to produce the anticancer natural products chloropestolides A to E. The sequence is that of Short-chain dehydrogenase/reductase iacJ from Pestalotiopsis fici (strain W106-1 / CGMCC3.15140).